A 661-amino-acid polypeptide reads, in one-letter code: Translation factor GUF1 homolog, mitochondrial (661 aa).

The region spanning 59 to 242 is the tr-type G domain; it reads ENIRNFCIVA…AIIDRIPSPK (184 aa). GTP is bound by residues 68–75, 135–139, and 189–192; these read AHVDHGKS, DTPGH, and NKVD.

Belongs to the TRAFAC class translation factor GTPase superfamily. Classic translation factor GTPase family. LepA subfamily.

The protein resides in the mitochondrion inner membrane. It carries out the reaction GTP + H2O = GDP + phosphate + H(+). Its function is as follows. Promotes mitochondrial protein synthesis. May act as a fidelity factor of the translation reaction, by catalyzing a one-codon backward translocation of tRNAs on improperly translocated ribosomes. Binds to mitochondrial ribosomes in a GTP-dependent manner. The protein is Translation factor GUF1 homolog, mitochondrial of Ixodes scapularis (Black-legged tick).